Reading from the N-terminus, the 276-residue chain is MLIHPQFDPVAIHIGPLAIRWYGLMYLAGFIMFLWFGRLRIRQPHMAARGWAARDLDDMLFFGVMGVILGGRLGYVLFYKPSYYLTHPLEIFKVWEGGMAFHGGFLGVLVAMWLFARLRQRHWLEVTDFIAPMIPCGLAAGRIGNFINGELWGRPTDLPWGMIFPQAGDNIPRHPSQLYQFAGEGVALFIILWLFARKPRPMGAVSGVFLIGYGGFRFAAEFAREPDSFLGLLAMHLSMGQWLSLPMILIGIAMVVWAYRRQARSGEERPVTDSGA.

The next 7 helical transmembrane spans lie at 17 to 37 (LAIRWYGLMYLAGFIMFLWFG), 59 to 79 (MLFFGVMGVILGGRLGYVLFY), 95 to 115 (WEGGMAFHGGFLGVLVAMWLF), 129 to 149 (FIAPMIPCGLAAGRIGNFING), 176 to 196 (SQLYQFAGEGVALFIILWLFA), 202 to 222 (MGAVSGVFLIGYGGFRFAAEF), and 237 to 257 (LSMGQWLSLPMILIGIAMVVW). Residue Arg142 coordinates a 1,2-diacyl-sn-glycero-3-phospho-(1'-sn-glycerol).

This sequence belongs to the Lgt family.

It localises to the cell inner membrane. The enzyme catalyses L-cysteinyl-[prolipoprotein] + a 1,2-diacyl-sn-glycero-3-phospho-(1'-sn-glycerol) = an S-1,2-diacyl-sn-glyceryl-L-cysteinyl-[prolipoprotein] + sn-glycerol 1-phosphate + H(+). Its pathway is protein modification; lipoprotein biosynthesis (diacylglyceryl transfer). Functionally, catalyzes the transfer of the diacylglyceryl group from phosphatidylglycerol to the sulfhydryl group of the N-terminal cysteine of a prolipoprotein, the first step in the formation of mature lipoproteins. In Cupriavidus pinatubonensis (strain JMP 134 / LMG 1197) (Cupriavidus necator (strain JMP 134)), this protein is Phosphatidylglycerol--prolipoprotein diacylglyceryl transferase.